Reading from the N-terminus, the 1128-residue chain is Nck-associated protein 1 (1128 aa).

Ser2 is modified (N-acetylserine). Residues 640 to 665 (AVNKKSKKQTGKKGEPEREKPGVESM) are disordered. The segment covering 651-665 (KKGEPEREKPGVESM) has biased composition (basic and acidic residues). A helical membrane pass occupies residues 995–1015 (IACLLMVFVAVSLPTLASNVM).

The protein belongs to the HEM-1/HEM-2 family. Component of the WAVE1 complex composed of ABI2, CYFIP1 or CYFIP2, BRK1, NCKAP1 and WASF1/WAVE1. Within the complex, a heterodimer containing NCKAP1 and CYFIP1 interacts with a heterotrimer formed by WAVE1, ABI2 and BRK1. Component of the WAVE2 complex composed of ABI1, CYFIP1/SRA1, NCKAP1/NAP1 and WASF2/WAVE2. CYFIP2 binds to activated RAC1 which causes the complex to dissociate, releasing activated WASF1. The complex can also be activated by NCK1. Associates preferentially with the first SH3 domain of NCK. Interacts with NYAP1, NYAP2 and MYO16. Interacts with TMEM132D. In terms of assembly, (Microbial infection) Interacts with human cytomegalovirus protein UL135. In terms of tissue distribution, expressed in all tissues examined except peripheral blood leukocytes, with highest expression in brain, heart, and skeletal muscle. Expressed in cells of various brain regions including Purkinje cells and dentate nucleus of the cerebellum, CA4 region and dentate gyrus of the hippocampus, and in frontal gray and white matter.

It localises to the cell membrane. Its subcellular location is the cell projection. The protein localises to the lamellipodium membrane. In terms of biological role, part of the WAVE complex that regulates lamellipodia formation. The WAVE complex regulates actin filament reorganization via its interaction with the Arp2/3 complex. Actin remodeling activity is regulated by RAC1. As component of the WAVE1 complex, required for BDNF-NTRK2 endocytic trafficking and signaling from early endosomes. The chain is Nck-associated protein 1 (NCKAP1) from Homo sapiens (Human).